Here is a 621-residue protein sequence, read N- to C-terminus: 1-deoxy-D-xylulose-5-phosphate synthase (621 aa).

Residues histidine 80 and 121 to 123 (GHS) contribute to the thiamine diphosphate site. Residue aspartate 152 participates in Mg(2+) binding. Residues 153 to 154 (GA), asparagine 181, tyrosine 288, and glutamate 370 each bind thiamine diphosphate. Mg(2+) is bound at residue asparagine 181.

It belongs to the transketolase family. DXPS subfamily. In terms of assembly, homodimer. The cofactor is Mg(2+). It depends on thiamine diphosphate as a cofactor.

It carries out the reaction D-glyceraldehyde 3-phosphate + pyruvate + H(+) = 1-deoxy-D-xylulose 5-phosphate + CO2. It functions in the pathway metabolic intermediate biosynthesis; 1-deoxy-D-xylulose 5-phosphate biosynthesis; 1-deoxy-D-xylulose 5-phosphate from D-glyceraldehyde 3-phosphate and pyruvate: step 1/1. Catalyzes the acyloin condensation reaction between C atoms 2 and 3 of pyruvate and glyceraldehyde 3-phosphate to yield 1-deoxy-D-xylulose-5-phosphate (DXP). This Vibrio campbellii (strain ATCC BAA-1116) protein is 1-deoxy-D-xylulose-5-phosphate synthase.